A 331-amino-acid polypeptide reads, in one-letter code: Cytosolic 5'-nucleotidase 3A (331 aa).

The active-site Nucleophile is the Asp-83. Positions 83 and 85 each coordinate Mg(2+). The Proton donor role is filled by Asp-85. Glu-130 provides a ligand contact to CMP. Positions 130 and 151 each coordinate N(7)-methyl-GMP. Substrate is bound by residues 198 to 200 (SAG) and Lys-247. Asp-272 lines the Mg(2+) pocket. The residue at position 273 (Ser-273) is a Phosphoserine.

The protein belongs to the pyrimidine 5'-nucleotidase family. Monomer. Isoform 2 is highly expressed in the brain, heart, spleen, kidney and blood. Isoform 2 is expressed (at protein level) in the spleen, skeletal muscle and gastrointestinal epithelia.

It localises to the cytoplasm. The catalysed reaction is N(7)-methyl-GMP + H2O = N(7)-methylguanosine + phosphate. The enzyme catalyses a ribonucleoside 5'-phosphate + H2O = a ribonucleoside + phosphate. Nucleotidase which shows specific activity towards cytidine monophosphate (CMP) and 7-methylguanosine monophosphate (m(7)GMP). CMP seems to be the preferred substrate. This Mus musculus (Mouse) protein is Cytosolic 5'-nucleotidase 3A (Nt5c3a).